A 591-amino-acid polypeptide reads, in one-letter code: F420 non-reducing hydrogenase II large subunit (591 aa).

Residue Glu-42 coordinates Mg(2+). Ni(2+)-binding residues include Cys-61, Cys-64, Cys-569, and Cys-572. Cys-64 contacts Fe cation. Position 572 (Cys-572) interacts with Fe cation. His-575 provides a ligand contact to Mg(2+).

The protein belongs to the [NiFe]/[NiFeSe] hydrogenase large subunit family. As to quaternary structure, composed of a large subunit (VhtA), a small subunit (VhtG) and a cytochrome subunit (VhtC). The cofactor is Ni(2+). It depends on Fe cation as a cofactor.

The protein localises to the cell membrane. The enzyme catalyses methanophenazine + H2 = dihydromethanophenazine. Part of the F420 non-reducing hydrogenase II complex that catalyzes the reduction of methanophenazine to dihydromethanophenazine. In Methanosarcina mazei (strain ATCC BAA-159 / DSM 3647 / Goe1 / Go1 / JCM 11833 / OCM 88) (Methanosarcina frisia), this protein is F420 non-reducing hydrogenase II large subunit.